We begin with the raw amino-acid sequence, 1014 residues long: Pre-mRNA-processing ATP-dependent RNA helicase prp11 (1014 aa).

Residues 1–11 are compositionally biased toward basic residues; that stretch reads MSRRTRSRSPP. The tract at residues 1–149 is disordered; the sequence is MSRRTRSRSP…SRFDRTERVG (149 aa). 2 stretches are compositionally biased toward basic and acidic residues: residues 15-87 and 106-121; these read YNRE…EYAR and RHAE…KSDE. A Q motif motif is present at residues 418-446; that stretch reads TSWSQCGLSAQTISVINSLGYEKPTSIQA. Positions 449-627 constitute a Helicase ATP-binding domain; sequence IPAITSGRDV…RKVLKKPVEI (179 aa). 462–469 lines the ATP pocket; that stretch reads AKTGSGKT. The DEAD box signature appears at 575–578; it reads DEAD. In terms of domain architecture, Helicase C-terminal spans 638-802; that stretch reads EVEQIVEVRP…PVPKELQTLA (165 aa). The disordered stretch occupies residues 815 to 875; the sequence is KAAGGGFGGK…PEKSTGDPTL (61 aa). 2 stretches are compositionally biased toward basic and acidic residues: residues 827–838 and 855–875; these read SRLDETRNAERK and AEAK…DPTL.

It belongs to the DEAD box helicase family. DDX46/PRP5 subfamily.

The protein localises to the nucleus. It carries out the reaction ATP + H2O = ADP + phosphate + H(+). Its function is as follows. ATP-dependent RNA helicase involved in pre-spliceosome/complex A assembly and mRNA splicing. Bridges U1 and U2 snRNPs during pre-spliceosome assembly and enables stable U2 snRNP association with intron RNA. Through its helicase activity probably catalyzes an ATP-dependent conformational change of U2 snRNP. The protein is Pre-mRNA-processing ATP-dependent RNA helicase prp11 (prp11) of Schizosaccharomyces pombe (strain 972 / ATCC 24843) (Fission yeast).